The primary structure comprises 155 residues: uncharacterized protein (155 aa).

One can recognise an N-acetyltransferase domain in the interval 6 to 155 (TCVRNARLAD…CDEIAMVKTL (150 aa)).

Belongs to the acetyltransferase family.

This is an uncharacterized protein from Chlorobaculum tepidum (strain ATCC 49652 / DSM 12025 / NBRC 103806 / TLS) (Chlorobium tepidum).